Reading from the N-terminus, the 190-residue chain is Large ribosomal subunit protein bL25 (190 aa).

The tract at residues 1–20 (MSEQKTLSVQKRDNLGKGAN) is disordered.

The protein belongs to the bacterial ribosomal protein bL25 family. CTC subfamily. Part of the 50S ribosomal subunit; part of the 5S rRNA/L5/L18/L25 subcomplex. Contacts the 5S rRNA. Binds to the 5S rRNA independently of L5 and L18.

In terms of biological role, this is one of the proteins that binds to the 5S RNA in the ribosome where it forms part of the central protuberance. In Nitratidesulfovibrio vulgaris (strain ATCC 29579 / DSM 644 / CCUG 34227 / NCIMB 8303 / VKM B-1760 / Hildenborough) (Desulfovibrio vulgaris), this protein is Large ribosomal subunit protein bL25.